Consider the following 292-residue polypeptide: MYSSSSIEGNLYGFSAQEPQRAPIGVFDSGVGGLTVLRQIYRQLPNESVIYFGDTARLPYGIRSQAEILTFVRDILDWMQQQHVKMVVMACNTSSALALDIVREEYDFPILGVILPGAKAAVQQGKRIGVISTPATAKSNAYRQAIWEIDPNVEVWQVGCPEFVPLIEQNRIQDPYTTEVARAYLEPLIQQDIDTLVYGCTHYPLLAPVLRSLLPPQVKIIDPAVHVVTACTQELDLLGLSNTHPPLPTRFAVSGCPQQFSQSGVHWLGYTPLVEAVDFAGVPVSQLQQDLA.

Residues 28–29 and 60–61 each bind substrate; these read DS and YG. C91 serves as the catalytic Proton donor/acceptor. 92–93 lines the substrate pocket; it reads NT. The active-site Proton donor/acceptor is C200. Substrate is bound at residue 201–202; the sequence is TH.

Belongs to the aspartate/glutamate racemases family.

The catalysed reaction is L-glutamate = D-glutamate. The protein operates within cell wall biogenesis; peptidoglycan biosynthesis. Provides the (R)-glutamate required for cell wall biosynthesis. The polypeptide is Glutamate racemase (Nostoc sp. (strain PCC 7120 / SAG 25.82 / UTEX 2576)).